The primary structure comprises 172 residues: Adenine phosphoribosyltransferase (172 aa).

It belongs to the purine/pyrimidine phosphoribosyltransferase family. Homodimer.

It is found in the cytoplasm. It carries out the reaction AMP + diphosphate = 5-phospho-alpha-D-ribose 1-diphosphate + adenine. Its pathway is purine metabolism; AMP biosynthesis via salvage pathway; AMP from adenine: step 1/1. Its function is as follows. Catalyzes a salvage reaction resulting in the formation of AMP, that is energically less costly than de novo synthesis. The sequence is that of Adenine phosphoribosyltransferase from Picosynechococcus sp. (strain ATCC 27264 / PCC 7002 / PR-6) (Agmenellum quadruplicatum).